The primary structure comprises 570 residues: 2-isopropylmalate synthase (570 aa).

The region spanning 31 to 305 (PIWMSTDLRD…DPELDFSHIN (275 aa)) is the Pyruvate carboxyltransferase domain. Residues aspartate 40, histidine 244, histidine 246, and asparagine 280 each coordinate Mg(2+). The tract at residues 437 to 570 (SDGAIGYVSH…RRSSAQATVA (134 aa)) is regulatory domain.

It belongs to the alpha-IPM synthase/homocitrate synthase family. LeuA type 2 subfamily. Homodimer. Mg(2+) serves as cofactor.

Its subcellular location is the cytoplasm. It carries out the reaction 3-methyl-2-oxobutanoate + acetyl-CoA + H2O = (2S)-2-isopropylmalate + CoA + H(+). The protein operates within amino-acid biosynthesis; L-leucine biosynthesis; L-leucine from 3-methyl-2-oxobutanoate: step 1/4. Catalyzes the condensation of the acetyl group of acetyl-CoA with 3-methyl-2-oxobutanoate (2-ketoisovalerate) to form 3-carboxy-3-hydroxy-4-methylpentanoate (2-isopropylmalate). This chain is 2-isopropylmalate synthase, found in Ralstonia pickettii (strain 12J).